Here is a 450-residue protein sequence, read N- to C-terminus: tRNA modification GTPase MnmE (450 aa).

Positions 25, 83, and 122 each coordinate (6S)-5-formyl-5,6,7,8-tetrahydrofolate. A TrmE-type G domain is found at 218-377 (GFKVAIIGKP…QMEALLDSIG (160 aa)). Position 228 (Asn-228) interacts with K(+). Residues 228-233 (NVGKSS), 247-253 (SDIAGTT), and 272-275 (DTAG) each bind GTP. Ser-232 lines the Mg(2+) pocket. Residues Ser-247, Ile-249, and Thr-252 each coordinate K(+). Thr-253 is a Mg(2+) binding site. Lys-450 contacts (6S)-5-formyl-5,6,7,8-tetrahydrofolate.

The protein belongs to the TRAFAC class TrmE-Era-EngA-EngB-Septin-like GTPase superfamily. TrmE GTPase family. Homodimer. Heterotetramer of two MnmE and two MnmG subunits. K(+) is required as a cofactor.

It is found in the cytoplasm. In terms of biological role, exhibits a very high intrinsic GTPase hydrolysis rate. Involved in the addition of a carboxymethylaminomethyl (cmnm) group at the wobble position (U34) of certain tRNAs, forming tRNA-cmnm(5)s(2)U34. This Sulfurovum sp. (strain NBC37-1) protein is tRNA modification GTPase MnmE.